Here is a 193-residue protein sequence, read N- to C-terminus: Cytidylate kinase (193 aa).

ATP is bound at residue G12–T20.

This sequence belongs to the cytidylate kinase family. Type 2 subfamily.

Its subcellular location is the cytoplasm. It catalyses the reaction CMP + ATP = CDP + ADP. It carries out the reaction dCMP + ATP = dCDP + ADP. The protein is Cytidylate kinase of Thermococcus sibiricus (strain DSM 12597 / MM 739).